A 171-amino-acid chain; its full sequence is Methylated-DNA--protein-cysteine methyltransferase (171 aa).

Cys-139 (nucleophile; methyl group acceptor) is an active-site residue.

It belongs to the MGMT family.

It localises to the cytoplasm. It catalyses the reaction a 6-O-methyl-2'-deoxyguanosine in DNA + L-cysteinyl-[protein] = S-methyl-L-cysteinyl-[protein] + a 2'-deoxyguanosine in DNA. The enzyme catalyses a 4-O-methyl-thymidine in DNA + L-cysteinyl-[protein] = a thymidine in DNA + S-methyl-L-cysteinyl-[protein]. In terms of biological role, involved in the cellular defense against the biological effects of O6-methylguanine (O6-MeG) and O4-methylthymine (O4-MeT) in DNA. Repairs the methylated nucleobase in DNA by stoichiometrically transferring the methyl group to a cysteine residue in the enzyme. This is a suicide reaction: the enzyme is irreversibly inactivated. The protein is Methylated-DNA--protein-cysteine methyltransferase of Salmonella typhi.